Consider the following 477-residue polypeptide: Protein translocase subunit SecY (477 aa).

A run of 10 helical transmembrane segments spans residues 28-48 (FMISFLITVVLLVLFRVLAII), 67-89 (FFSLFNLLGGGGLNQLSLFAVGI), 130-150 (IITLPFALVQSFAVIQIATNS), 165-185 (DFVAFYIIAMTAGTYLSVFLG), 196-216 (GITLLILSGILAQLPEGFIAA), 234-254 (AISFFIYFMAFVTLLFATTFI), 286-306 (SAGVIPVIFASSIMSIPVTIA), 329-349 (GIVLYGILVILFSFFYSYIQI), 387-407 (FIGAPFLTVIAIIPYIVSALI), and 413-433 (LSLGGTGIIIIVTAVVEFMSA).

This sequence belongs to the SecY/SEC61-alpha family. In terms of assembly, component of the Sec protein translocase complex. Heterotrimer consisting of SecY, SecE and SecG subunits. The heterotrimers can form oligomers, although 1 heterotrimer is thought to be able to translocate proteins. Interacts with the ribosome. Interacts with SecDF, and other proteins may be involved. Interacts with SecA.

It localises to the cell membrane. In terms of biological role, the central subunit of the protein translocation channel SecYEG. Consists of two halves formed by TMs 1-5 and 6-10. These two domains form a lateral gate at the front which open onto the bilayer between TMs 2 and 7, and are clamped together by SecE at the back. The channel is closed by both a pore ring composed of hydrophobic SecY resides and a short helix (helix 2A) on the extracellular side of the membrane which forms a plug. The plug probably moves laterally to allow the channel to open. The ring and the pore may move independently. The polypeptide is Protein translocase subunit SecY (Mycoplasma pneumoniae (strain ATCC 29342 / M129 / Subtype 1) (Mycoplasmoides pneumoniae)).